A 78-amino-acid chain; its full sequence is Sec-independent protein translocase protein TatA (78 aa).

A helical membrane pass occupies residues 1 to 21; the sequence is MGGISIWQLLIVALIVVLLFG. A disordered region spans residues 40-78; that stretch reads KSAMSSEEEKKAIEDSASEKTAQTEEKKTESKDKDKEQV. Residues 46–78 are compositionally biased toward basic and acidic residues; the sequence is EEEKKAIEDSASEKTAQTEEKKTESKDKDKEQV.

This sequence belongs to the TatA/E family. In terms of assembly, the Tat system comprises two distinct complexes: a TatABC complex, containing multiple copies of TatA, TatB and TatC subunits, and a separate TatA complex, containing only TatA subunits. Substrates initially bind to the TatABC complex, which probably triggers association of the separate TatA complex to form the active translocon.

It localises to the cell inner membrane. Functionally, part of the twin-arginine translocation (Tat) system that transports large folded proteins containing a characteristic twin-arginine motif in their signal peptide across membranes. TatA could form the protein-conducting channel of the Tat system. The protein is Sec-independent protein translocase protein TatA of Shewanella sediminis (strain HAW-EB3).